A 213-amino-acid polypeptide reads, in one-letter code: ATP-dependent Clp protease proteolytic subunit (213 aa).

The active-site Nucleophile is Ser114. His139 is an active-site residue.

This sequence belongs to the peptidase S14 family. As to quaternary structure, fourteen ClpP subunits assemble into 2 heptameric rings which stack back to back to give a disk-like structure with a central cavity, resembling the structure of eukaryotic proteasomes.

The protein resides in the cytoplasm. It carries out the reaction Hydrolysis of proteins to small peptides in the presence of ATP and magnesium. alpha-casein is the usual test substrate. In the absence of ATP, only oligopeptides shorter than five residues are hydrolyzed (such as succinyl-Leu-Tyr-|-NHMec, and Leu-Tyr-Leu-|-Tyr-Trp, in which cleavage of the -Tyr-|-Leu- and -Tyr-|-Trp bonds also occurs).. Cleaves peptides in various proteins in a process that requires ATP hydrolysis. Has a chymotrypsin-like activity. Plays a major role in the degradation of misfolded proteins. In Pseudomonas syringae pv. syringae (strain B728a), this protein is ATP-dependent Clp protease proteolytic subunit.